The chain runs to 559 residues: Thermosome subunit alpha (559 aa).

A compositionally biased stretch (basic and acidic residues) spans 536-552 (SGEKKGEKKEGGEEEKS). A disordered region spans residues 536-559 (SGEKKGEKKEGGEEEKSSTPSSLE).

Belongs to the TCP-1 chaperonin family. As to quaternary structure, forms a Heterooligomeric complex of two stacked nine-membered rings; one of alpha and the other of beta subunits.

Molecular chaperone; binds unfolded polypeptides in vitro, and has a weak ATPase activity. This is Thermosome subunit alpha (thsA) from Sulfurisphaera tokodaii (strain DSM 16993 / JCM 10545 / NBRC 100140 / 7) (Sulfolobus tokodaii).